A 229-amino-acid chain; its full sequence is Flagellar L-ring protein (229 aa).

Residues 1 to 25 (MKQVRLLPSATVRAACAVAVAALAG) form the signal peptide. Cysteine 26 is lipidated: N-palmitoyl cysteine. A lipid anchor (S-diacylglycerol cysteine) is attached at cysteine 26.

The protein belongs to the FlgH family. As to quaternary structure, the basal body constitutes a major portion of the flagellar organelle and consists of four rings (L,P,S, and M) mounted on a central rod.

The protein localises to the cell outer membrane. The protein resides in the bacterial flagellum basal body. Functionally, assembles around the rod to form the L-ring and probably protects the motor/basal body from shearing forces during rotation. The polypeptide is Flagellar L-ring protein (Burkholderia vietnamiensis (strain G4 / LMG 22486) (Burkholderia cepacia (strain R1808))).